Reading from the N-terminus, the 292-residue chain is Forkhead box protein R1 (292 aa).

Disordered stretches follow at residues 31-50 (PPKLPLEKKPNPDKDGPDYE) and 65-166 (PGKL…ASSQ). 2 stretches are compositionally biased toward basic and acidic residues: residues 35–47 (PLEKKPNPDKDGP) and 70–79 (VSGRRKREDL). A compositionally biased stretch (polar residues) spans 80-89 (TSTLPSSQPP). The segment covering 129-140 (LTEEEEAEDQED) has biased composition (acidic residues). The span at 149–161 (PHKRAPLQSRRLR) shows a compositional bias: basic residues. The fork-head DNA-binding region spans 173 to 272 (RPPLNYFHLI…EEARALASTR (100 aa)).

As to expression, expressed in testis (at protein level).

The protein resides in the nucleus. The protein localises to the cytoplasm. Its subcellular location is the perinuclear region. Transcription factor which acts as both an activator and a repressor. Activates transcription of a number of genes including the heat shock chaperones HSPA1A and HSPA6 and the antioxidant NADPH-dependent reductase DHRS2 which are involved in protection against oxidative stress. Required for normal brain development. This Homo sapiens (Human) protein is Forkhead box protein R1 (FOXR1).